The chain runs to 149 residues: Large ribosomal subunit protein bL9 (149 aa).

The protein belongs to the bacterial ribosomal protein bL9 family.

Binds to the 23S rRNA. This chain is Large ribosomal subunit protein bL9, found in Klebsiella pneumoniae (strain 342).